Here is a 239-residue protein sequence, read N- to C-terminus: Exosome complex component Rrp4 (239 aa).

One can recognise an S1 motif domain in the interval 67–139 (GDFVVGIVEE…PVQRVELSLL (73 aa)). A KH domain is found at 151–217 (QGGQVVEIDP…LAVRAIREIE (67 aa)).

This sequence belongs to the RRP4 family. As to quaternary structure, component of the archaeal exosome complex. Forms a trimer of Rrp4 and/or Csl4 subunits. The trimer associates with a hexameric ring-like arrangement composed of 3 Rrp41-Rrp42 heterodimers.

The protein localises to the cytoplasm. Functionally, non-catalytic component of the exosome, which is a complex involved in RNA degradation. Increases the RNA binding and the efficiency of RNA degradation. Confers strong poly(A) specificity to the exosome. The protein is Exosome complex component Rrp4 of Methanopyrus kandleri (strain AV19 / DSM 6324 / JCM 9639 / NBRC 100938).